The chain runs to 390 residues: Argininosuccinate synthase (390 aa).

Residue 6 to 14 coordinates ATP; it reads AYSGGLDTT. Position 84 (Y84) interacts with L-citrulline. Residue G114 participates in ATP binding. L-aspartate is bound by residues T116, N120, and D121. N120 contacts L-citrulline. L-citrulline contacts are provided by R124, S171, S180, E253, and Y265.

This sequence belongs to the argininosuccinate synthase family. Type 1 subfamily. Homotetramer.

The protein localises to the cytoplasm. It carries out the reaction L-citrulline + L-aspartate + ATP = 2-(N(omega)-L-arginino)succinate + AMP + diphosphate + H(+). It participates in amino-acid biosynthesis; L-arginine biosynthesis; L-arginine from L-ornithine and carbamoyl phosphate: step 2/3. The polypeptide is Argininosuccinate synthase (Sulfurisphaera tokodaii (strain DSM 16993 / JCM 10545 / NBRC 100140 / 7) (Sulfolobus tokodaii)).